A 206-amino-acid chain; its full sequence is Ran-specific GTPase-activating protein (206 aa).

The segment covering 1–26 has biased composition (basic and acidic residues); the sequence is MAAAKDTHEDHDTSTENADESNHDPQ. The disordered stretch occupies residues 1–33; it reads MAAAKDTHEDHDTSTENADESNHDPQFEPIVSL. Ala2 is modified (N-acetylalanine). Position 13 is a phosphothreonine (Thr13). Phosphoserine occurs at positions 21 and 60. The RanBD1 domain occupies 26 to 164; the sequence is QFEPIVSLPE…FEECRKEIEE (139 aa). Residue Lys150 is modified to N6-acetyllysine; alternate. The residue at position 150 (Lys150) is an N6-succinyllysine; alternate. Residues 162-184 show a composition bias toward basic and acidic residues; that stretch reads IEEKEKKGSGKNDSTEKVVEKLE. The disordered stretch occupies residues 162–206; it reads IEEKEKKGSGKNDSTEKVVEKLEALSVQEGEQPQDAAPAAVEEEQ. Lys182 bears the N6-acetyllysine mark. Ser187 carries the phosphoserine modification.

The protein belongs to the RANBP1 family. As to quaternary structure, interacts with RAN (via C-terminus of GTP-bound form) but not with GDP-bound RAN. Identified in a complex composed of RAN, RANGAP1 and RANBP1. Identified in a complex that contains TNPO1, RAN and RANBP1. Identified in a complex that contains CSE1L, KPNA2, RAN and RANBP1. Identified in a complex with nucleotide-free RAN and RCC1.

In terms of biological role, plays a role in RAN-dependent nucleocytoplasmic transport. Alleviates the TNPO1-dependent inhibition of RAN GTPase activity and mediates the dissociation of RAN from proteins involved in transport into the nucleus. Induces a conformation change in the complex formed by XPO1 and RAN that triggers the release of the nuclear export signal of cargo proteins. Promotes the disassembly of the complex formed by RAN and importin beta. Promotes dissociation of RAN from a complex with KPNA2 and CSE1L. Required for normal mitotic spindle assembly and normal progress through mitosis via its effect on RAN. Does not increase the RAN GTPase activity by itself, but increases GTP hydrolysis mediated by RANGAP1. Inhibits RCC1-dependent exchange of RAN-bound GDP by GTP. The polypeptide is Ran-specific GTPase-activating protein (RANBP1) (Bos taurus (Bovine)).